The chain runs to 294 residues: Elongation factor Ts (294 aa).

Positions 80–83 are involved in Mg(2+) ion dislocation from EF-Tu; that stretch reads TDFV.

This sequence belongs to the EF-Ts family.

It localises to the cytoplasm. In terms of biological role, associates with the EF-Tu.GDP complex and induces the exchange of GDP to GTP. It remains bound to the aminoacyl-tRNA.EF-Tu.GTP complex up to the GTP hydrolysis stage on the ribosome. This Listeria monocytogenes serotype 4b (strain CLIP80459) protein is Elongation factor Ts.